Here is a 133-residue protein sequence, read N- to C-terminus: Methylglyoxal synthase (133 aa).

Residues 1–133 enclose the MGS-like domain; sequence MPPKPRIALI…ARENGAAQAG (133 aa). Substrate contacts are provided by residues His12, Lys16, 38-41, and 58-59; these read TGTT and SG. Asp64 serves as the catalytic Proton donor/acceptor. Substrate is bound at residue His91.

The protein belongs to the methylglyoxal synthase family.

The catalysed reaction is dihydroxyacetone phosphate = methylglyoxal + phosphate. Catalyzes the formation of methylglyoxal from dihydroxyacetone phosphate. The polypeptide is Methylglyoxal synthase (Cupriavidus taiwanensis (strain DSM 17343 / BCRC 17206 / CCUG 44338 / CIP 107171 / LMG 19424 / R1) (Ralstonia taiwanensis (strain LMG 19424))).